The primary structure comprises 294 residues: Probable WRKY transcription factor 70 (294 aa).

Positions 72 to 94 are disordered; it reads SQNASCDNDGKFEDSGDSRKRLG. The span at 79 to 91 shows a compositional bias: basic and acidic residues; sequence NDGKFEDSGDSRK. A Nuclear localization signal motif is present at residues 90–97; the sequence is RKRLGPVK. Positions 114–182 form a DNA-binding region, WRKY; the sequence is IESTILEDAF…YIGNHTCNTN (69 aa). Residues 201 to 229 are disordered; sequence SEDHKSPSLSTSMKEEDNPHRHHGSSTEN.

It belongs to the WRKY group III family. In terms of assembly, interacts with WRKY30. Binds to BZR2/BES1 to cooperatively regulate the expression of target genes. Binds to unmodified (i.e. not sumoylated) NPR1. In terms of processing, phosphorylated and destabilized by ASK7/BIN2. In terms of tissue distribution, expressed in leaves and flowers.

It localises to the nucleus. Transcription factor involved in senescence, biotic and abiotic stress responses by modulating various phytohormones signaling pathways. Interacts specifically with the W box (5'-(T)TGAC[CT]-3'), a frequently occurring elicitor-responsive cis-acting element. Binds to the 5'-[CT]GACTTTT-3' motif in promoters of target genes to induce their expression. Binding to the W-box element of PR-1 promoter is mediated by not-sumoylated NPR1 in the absence of salicylic acid. Plays an important but not indispensable role in jasmonate and salicylic acid signaling. Positively regulates the salicylic acid (SA)-mediated signal pathway, but negatively the jasmonic acid (JA)-mediated signal pathway, thus determining the balance between these mutually antagonistic pathways. Together with WRKY46, WRKY53 and WRKY54, prevents defense response to the necrotrophic pathogens P.carotovorum and B.cinerea, but promotes defense responses (including SA-induced pathogenesis-related (PR) genes expression) against biotrophic/hemibiotrophic SA-monitored pathogens (e.g. P.syringae, E.carotovora subsp. carotovora SCC3193 and E.cichoracearum), probably by regulating negatively the JA/ET and positively the SA signaling pathways. Contributes to the suppression of jasmonic acid (MeJA)-induced expression of JA-responsive genes (e.g. PDF1.2). Promotes susceptibility to JA-monitored pathogens (e.g. A.brassicicola), probably by facilitating SA-controlled suppression of JA-mediated defense. Represses the biosynthesis of the phytoalexin camalexin and indol-3-ylmethyl glucosinolate (IGS). Represses both SA and JA/ethylene (ET) mediated defense marker genes expression. Negative regulator of SA biosynthesis. Negative regulator of EDS1-dependent defense against E.amylovora. Required for RPP4-mediated disease resistance and basal defense against H.parasitica, probably via late up-regulation (LURP) of resistance genes (e.g. CML10/CaBP22 and LURP1). Probably involved in defense responses toward insects (e.g. P.xylostella and B.brassicae). Together with WRKY54, negative regulator of developmental senescence, probably via the regulation of several senescence-associated markers genes. Together with WRKY46 and WRKY54, promotes brassinosteroid (BR)-regulated plant growth but prevent drought response by modulating gene expression. In collaboration with WRKY54, prevents stomatal closure and, consequently, osmotic stress tolerance. Regulates rhizobacterium B.cereus AR156-induced systemic resistance (ISR) to P.syringae pv. tomato DC3000. This chain is Probable WRKY transcription factor 70, found in Arabidopsis thaliana (Mouse-ear cress).